The following is a 644-amino-acid chain: Chaperone protein DnaK (644 aa).

The residue at position 199 (Thr199) is a Phosphothreonine; by autocatalysis. A disordered region spans residues 603–644; sequence YAKKSSEGQAAQGQTQSQESTKPAEEGVVDAEFEEVKEEDKK. Residues 609–623 show a composition bias toward polar residues; the sequence is EGQAAQGQTQSQEST. Over residues 629–644 the composition is skewed to acidic residues; it reads GVVDAEFEEVKEEDKK.

It belongs to the heat shock protein 70 family.

Its function is as follows. Acts as a chaperone. The polypeptide is Chaperone protein DnaK (Legionella pneumophila (strain Corby)).